The chain runs to 917 residues: MSNEYPYASMRDSFDLSAYFVVGPEDCKGRPLTDVVDQALHGGATFIQLRAKEADASELTDMARDIAQIIEDNEKSDSVAFVIDDRADVVWQARRKGIKVDGVHIGQTDMEPREARALLGDEAIVGLSAETESLVRLINELPDGCIDYIGAGPLHVSTTKPEASVGGNDGSGKTLDAAQINTICVASEFPVVVGGGVTAADMAMLADTKAAGWFVVSAIAGAENPEEAARTMVEGWKAVRGDKKHGYAPRVVTHTPATDTQAAQEGAAKPGSEATEKKFTNAKDAKDAQKLAKQQRVDIAARGSKQRDKAHIRKTKSVPFTYQYGSYDLEVPYTEIKLSDTPGVGPNPPFHDYNTEGPKCDPKEGLKPLRLDWIRDRGDIEDYEGRRRNLEDDGKRAIKRGRATKEWRGRKHEPMRAKDHPITQMWYARHGIITPEMQYVATRENCDVELVRSELAAGRAVMPCNINHPEAEPMIIGSAFLTKLNANMGNSAVTSSIDEEVEKLTWATKWGADTVMDLSTGNDIHTTREWILRNSPVPIGTVPMYQALEKVEDDASKLSWELFRDTVIEQCEQGVDYMTIHAGVLLRYVPLTANRVTGIVSRGGSIMADWCLRHHQESFLYTHFDELCDIFAKYDVAFSLGDGLRPGSLADANDAAQLSELMTLGELTERAWAKDVQVMIEGPGHVPFDTVRMNIELEKAVCHNAPFYTLGPLTTDTAPGYDHITSAIGATEIGRYGTAMLCYVTPKEHLGLPNKDDVKQGVIAYKIACHAADIAKHHPHAMDRDNAISKARFEFRWLDQFNLSYDPDTAIAFHDDTLPAEPAKMAHFCSMCGPKFCSMAISQNIRKAFGGEAAQQQIVKEAAAGIDSEALATAKANVDNGVVSANVLSPEEILAGMDAMSEKYTAQGGKLYSTAQE.

The interval 1–243 is thiamine-phosphate synthase; the sequence is MSNEYPYASM…EGWKAVRGDK (243 aa). Residues 48 to 52 and Asp84 each bind 4-amino-2-methyl-5-(diphosphooxymethyl)pyrimidine; that span reads QLRAK. Asp85 and Asp109 together coordinate Mg(2+). Ser128 provides a ligand contact to 4-amino-2-methyl-5-(diphosphooxymethyl)pyrimidine. 157–159 contributes to the 2-[(2R,5Z)-2-carboxy-4-methylthiazol-5(2H)-ylidene]ethyl phosphate binding site; sequence STT. A 4-amino-2-methyl-5-(diphosphooxymethyl)pyrimidine-binding site is contributed by Lys160. Residues Gly196 and 216-217 each bind 2-[(2R,5Z)-2-carboxy-4-methylthiazol-5(2H)-ylidene]ethyl phosphate; that span reads VS. The interval 256–311 is disordered; the sequence is PATDTQAAQEGAAKPGSEATEKKFTNAKDAKDAQKLAKQQRVDIAARGSKQRDKAH. The segment at 271-917 is phosphomethylpyrimidine synthase; sequence GSEATEKKFT…GGKLYSTAQE (647 aa). Residues 274 to 290 show a composition bias toward basic and acidic residues; it reads ATEKKFTNAKDAKDAQK. 5-amino-1-(5-phospho-beta-D-ribosyl)imidazole contacts are provided by residues Asn487, Met516, Tyr545, His581, 601-603, 642-645, and Glu681; these read SRG and DGLR. His685 contributes to the Zn(2+) binding site. Tyr708 lines the 5-amino-1-(5-phospho-beta-D-ribosyl)imidazole pocket. His749 is a binding site for Zn(2+). The [4Fe-4S] cluster site is built by Cys829, Cys832, and Cys837.

This sequence in the N-terminal section; belongs to the thiamine-phosphate synthase family. It in the C-terminal section; belongs to the ThiC family. Requires [4Fe-4S] cluster as cofactor.

The enzyme catalyses 2-[(2R,5Z)-2-carboxy-4-methylthiazol-5(2H)-ylidene]ethyl phosphate + 4-amino-2-methyl-5-(diphosphooxymethyl)pyrimidine + 2 H(+) = thiamine phosphate + CO2 + diphosphate. It catalyses the reaction 2-(2-carboxy-4-methylthiazol-5-yl)ethyl phosphate + 4-amino-2-methyl-5-(diphosphooxymethyl)pyrimidine + 2 H(+) = thiamine phosphate + CO2 + diphosphate. It carries out the reaction 4-methyl-5-(2-phosphooxyethyl)-thiazole + 4-amino-2-methyl-5-(diphosphooxymethyl)pyrimidine + H(+) = thiamine phosphate + diphosphate. The catalysed reaction is 5-amino-1-(5-phospho-beta-D-ribosyl)imidazole + S-adenosyl-L-methionine = 4-amino-2-methyl-5-(phosphooxymethyl)pyrimidine + CO + 5'-deoxyadenosine + formate + L-methionine + 3 H(+). It functions in the pathway cofactor biosynthesis; thiamine diphosphate biosynthesis; thiamine phosphate from 4-amino-2-methyl-5-diphosphomethylpyrimidine and 4-methyl-5-(2-phosphoethyl)-thiazole: step 1/1. Its function is as follows. Condenses 4-methyl-5-(beta-hydroxyethyl)thiazole monophosphate (THZ-P) and 2-methyl-4-amino-5-hydroxymethyl pyrimidine pyrophosphate (HMP-PP) to form thiamine monophosphate (TMP). Functionally, catalyzes the synthesis of the hydroxymethylpyrimidine phosphate (HMP-P) moiety of thiamine from aminoimidazole ribotide (AIR) in a radical S-adenosyl-L-methionine (SAM)-dependent reaction. The sequence is that of Thiamine biosynthesis bifunctional protein ThiEC (thiE/thiC) from Bifidobacterium longum (strain NCC 2705).